The chain runs to 2359 residues: Nonribosomal peptide synthetase anaPS (2359 aa).

The interval 239 to 633 (RNATVHGDTL…VRRKDNQVKI (395 aa)) is adenylation 1. The 77-residue stretch at 770–846 (AAQGKGEEAI…ELASAANLSN (77 aa)) folds into the Carrier 1 domain. The residue at position 807 (S807) is an O-(pantetheine 4'-phosphoryl)serine. The tract at residues 883–1292 (EDIYPSTALQ…VGDLPRMSRQ (410 aa)) is condensation 1. Residues 1321–1709 (LEYPNACAVS…GRKDSQIKIR (389 aa)) are adenylation 2. Residues 1842–1918 (APSNSVEQDL…AIANKIGVVS (77 aa)) form the Carrier 2 domain. O-(pantetheine 4'-phosphoryl)serine is present on S1879. The condensation 2 stretch occupies residues 1936–2356 (LTPIQEFFFE…LVKCLEDLAS (421 aa)).

Belongs to the NRP synthetase family.

It carries out the reaction anthranilate + L-tryptophan + 2 ATP = (R)-benzodiazepinedione + 2 AMP + 2 diphosphate + H(+). It functions in the pathway alkaloid biosynthesis. Its function is as follows. Nonribosomal peptide synthetase; part of the gene cluster that mediates the biosynthesis of the prenylated pyrroloindoline diketopiperazine acetylaszonalenin. The first step in the pathway is the formation of (R)-benzodiazepinedione by condensation of tryptophan and anthranilic acid catalyzed by the non-ribosomal peptide synthetase anaPS. The prenyltransferase anaPT then converts (R)-benzodiazepinedione to aszonalenin in the presence of dimethylallyl diphosphate (DMAPP) via C3-prenylation. The last step in the biosynthesis of acetylaszonalenin via acetylation of aszonalenin at position N1 catalyzed by anaAT. The protein is Nonribosomal peptide synthetase anaPS of Neosartorya fischeri (strain ATCC 1020 / DSM 3700 / CBS 544.65 / FGSC A1164 / JCM 1740 / NRRL 181 / WB 181) (Aspergillus fischerianus).